The chain runs to 517 residues: Superoxide-generating NADPH oxidase heavy chain subunit A (517 aa).

At 1–19 (MRLPTKEEIQRYWVNEGNK) the chain is on the cytoplasmic side. A helical membrane pass occupies residues 20 to 40 (LILVILYTLGNIAAFVYTFVH). Residues 41–62 (YYNSPAFEVVGYGVCFARGCAQ) lie on the Extracellular side of the membrane. Positions 58–201 (RGCAQLLKLN…LFVVFFGLLV (144 aa)) constitute a Ferric oxidoreductase domain. Residues 63–83 (LLKLNCALILVPVLRNLLSFL) form a helical membrane-spanning segment. At 84–97 (RGTFLNNYVPFDKN) the chain is on the cytoplasmic side. A helical membrane pass occupies residues 98-118 (IVFHKLIAWVICFATFGHVMA). His-101 and His-115 together coordinate heme. Topologically, residues 119 to 149 (HFNNFRLYQDITPQEYKRILGIDYPNLTPIK) are extracellular. Residues 150–170 (YAFATLAGWTGHVVCIVMVLM) traverse the membrane as a helical segment. The Cytoplasmic segment spans residues 171–184 (YTSAVESIRRPMFE). The helical transmembrane segment at 185 to 205 (GFWYTHHLFVVFFGLLVVHGL) threads the bilayer. Heme-binding residues include His-190 and His-203. Residue His-206 is a topological domain, extracellular. Residues 207-227 (SILEPTSFWKWVIGPCALYIV) form a helical membrane-spanning segment. At 228-517 (ERLIRLLRSK…CRFHYNKENF (290 aa)) the chain is on the cytoplasmic side. One can recognise an FAD-binding FR-type domain in the interval 229 to 349 (RLIRLLRSKK…DGPFGAASEE (121 aa)). 283 to 289 (HPFTITS) provides a ligand contact to FAD.

Composed of a heavy chain and a light chain. It depends on FAD as a cofactor.

It is found in the membrane. In terms of biological role, critical component of the membrane-bound oxidase that generates superoxide. It is the terminal component of a respiratory chain that transfers single electrons from cytoplasmic NADPH across the plasma membrane to molecular oxygen on the exterior. In Dictyostelium discoideum (Social amoeba), this protein is Superoxide-generating NADPH oxidase heavy chain subunit A (noxA).